A 279-amino-acid polypeptide reads, in one-letter code: Thymidylate synthase (279 aa).

Residue 141–142 participates in dUMP binding; it reads RR. The active-site Nucleophile is Cys-161. DUMP-binding positions include 181–184, Asn-192, and 222–224; these read RSND and HVY. (6R)-5,10-methylene-5,6,7,8-tetrahydrofolate is bound at residue Asp-184. Position 278 (Ala-278) interacts with (6R)-5,10-methylene-5,6,7,8-tetrahydrofolate.

This sequence belongs to the thymidylate synthase family. Bacterial-type ThyA subfamily. In terms of assembly, homodimer.

Its subcellular location is the cytoplasm. It carries out the reaction dUMP + (6R)-5,10-methylene-5,6,7,8-tetrahydrofolate = 7,8-dihydrofolate + dTMP. The protein operates within pyrimidine metabolism; dTTP biosynthesis. Functionally, catalyzes the reductive methylation of 2'-deoxyuridine-5'-monophosphate (dUMP) to 2'-deoxythymidine-5'-monophosphate (dTMP) while utilizing 5,10-methylenetetrahydrofolate (mTHF) as the methyl donor and reductant in the reaction, yielding dihydrofolate (DHF) as a by-product. This enzymatic reaction provides an intracellular de novo source of dTMP, an essential precursor for DNA biosynthesis. In Bacillus subtilis subsp. natto, this protein is Thymidylate synthase.